Here is a 264-residue protein sequence, read N- to C-terminus: RFTDPKTLAHLLKYDSTFGVYNKKVESRDGAIVVDGREIKIIAERDPKNLPWGKLGXDVVIESTGVFSSATSDKGGYLDHVEAGAGAKKVILTAPAKDEIKTIXLGVXDHDINXDLKAVSNASCTTNCLAPLAKVLHESFGIEQGLMTTVHAYTNXQRILDLPHSDLRRARAAALSIIPTSTGAAKAVGLVLPELKGKLNGTSMRVPVPTGSIVDLTVQLKKKDVTKEEINSVLKKASETPELNGILGYTEDPXVSSDXKGNSH.

NAD(+) is bound by residues arginine 45 and threonine 93. D-glyceraldehyde 3-phosphate-binding positions include 123–125 (SCT) and threonine 154. Cysteine 124 acts as the Nucleophile in catalysis. Asparagine 155 lines the NAD(+) pocket. D-glyceraldehyde 3-phosphate is bound by residues arginine 169, 182 to 183 (TG), and arginine 205. The disordered stretch occupies residues 245–264 (GILGYTEDPXVSSDXKGNSH).

It belongs to the glyceraldehyde-3-phosphate dehydrogenase family. In terms of assembly, homotetramer.

Its subcellular location is the cytoplasm. It catalyses the reaction D-glyceraldehyde 3-phosphate + phosphate + NAD(+) = (2R)-3-phospho-glyceroyl phosphate + NADH + H(+). It participates in carbohydrate degradation; glycolysis; pyruvate from D-glyceraldehyde 3-phosphate: step 1/5. Its function is as follows. Catalyzes the oxidative phosphorylation of glyceraldehyde 3-phosphate (G3P) to 1,3-bisphosphoglycerate (BPG) using the cofactor NAD. The first reaction step involves the formation of a hemiacetal intermediate between G3P and a cysteine residue, and this hemiacetal intermediate is then oxidized to a thioester, with concomitant reduction of NAD to NADH. The reduced NADH is then exchanged with the second NAD, and the thioester is attacked by a nucleophilic inorganic phosphate to produce BPG. The sequence is that of Glyceraldehyde-3-phosphate dehydrogenase (gap) from Borrelia hermsii.